The primary structure comprises 177 residues: uncharacterized protein (177 aa).

Helical transmembrane passes span isoleucine 4–leucine 24, isoleucine 33–isoleucine 53, isoleucine 80–leucine 100, and methionine 115–valine 135.

It is found in the cell membrane. This is an uncharacterized protein from Bacillus subtilis (strain 168).